A 210-amino-acid polypeptide reads, in one-letter code: Putative odorant-binding protein A5 (210 aa).

The signal sequence occupies residues 1–19 (MKLPALHLLFLGFICLARS).

It belongs to the phosphatidylethanolamine-binding protein family. Cells at the bases of a few scattered sensilla on the posterior surface of the antenna.

The protein resides in the secreted. The protein is Putative odorant-binding protein A5 (a5) of Drosophila melanogaster (Fruit fly).